The chain runs to 241 residues: NEP1-interacting protein 2 (241 aa).

The segment at 1–20 is disordered; that stretch reads MASSSSSSYRFQSGSYPLSS. Residues 1-36 are Lumenal, thylakoid-facing; the sequence is MASSSSSSYRFQSGSYPLSSSPSLGNFVERIKDACH. A helical transmembrane segment spans residues 37–57; it reads FLVSAVLGTIISAILTFFFAL. Topologically, residues 58–76 are stromal; the sequence is VGTLLGALTGALIGQETES. A helical transmembrane segment spans residues 77 to 97; sequence GFIRGAAIGAISGAVFSIEVF. Residues 98–109 are Lumenal, thylakoid-facing; sequence ESSLDLWKSDES. Residues 110-130 traverse the membrane as a helical segment; it reads GFGCFLYLIDVIVSLLSGRLV. The Stromal portion of the chain corresponds to 131–241; that stretch reads RERIGPAMLS…GSCPMCRRDI (111 aa). An RING-type; atypical zinc finger spans residues 196–238; it reads CSVCLQDFQLGETVRSLPHCHHMFHLPCIDNWLLRHGSCPMCR.

This sequence belongs to the RING-type zinc finger family. NIP subfamily. In terms of assembly, interacts with RPOT2.

The protein resides in the plastid. It localises to the chloroplast thylakoid membrane. Functionally, intrinsic thylakoid membrane protein that fixes RPOT2 on the stromal side of the thylakoid membrane. This is NEP1-interacting protein 2 (NIP2) from Arabidopsis thaliana (Mouse-ear cress).